The following is a 286-amino-acid chain: Polyamine aminopropyltransferase (286 aa).

The PABS domain maps to 6 to 239 (PVWIDEVFED…GWWSWLYASD (234 aa)). Position 34 (Gln-34) interacts with S-methyl-5'-thioadenosine. Spermidine is bound by residues His-65 and Asp-89. S-methyl-5'-thioadenosine contacts are provided by residues Glu-109 and 140 to 141 (DG). Residue Asp-159 is the Proton acceptor of the active site. 159-162 (DGSD) contacts spermidine. Pro-166 contributes to the S-methyl-5'-thioadenosine binding site.

This sequence belongs to the spermidine/spermine synthase family. Homodimer or homotetramer. Homodimer.

It is found in the cytoplasm. It carries out the reaction S-adenosyl 3-(methylsulfanyl)propylamine + putrescine = S-methyl-5'-thioadenosine + spermidine + H(+). Its pathway is amine and polyamine biosynthesis; spermidine biosynthesis; spermidine from putrescine: step 1/1. Catalyzes the irreversible transfer of a propylamine group from the amino donor S-adenosylmethioninamine (decarboxy-AdoMet) to putrescine (1,4-diaminobutane) to yield spermidine. This Synechococcus elongatus (strain ATCC 33912 / PCC 7942 / FACHB-805) (Anacystis nidulans R2) protein is Polyamine aminopropyltransferase.